Consider the following 584-residue polypeptide: DNA ligase (584 aa).

ATP is bound at residue glutamate 249. Lysine 251 functions as the N6-AMP-lysine intermediate in the catalytic mechanism. Positions 256, 271, 301, 341, 416, and 422 each coordinate ATP.

The protein belongs to the ATP-dependent DNA ligase family. Mg(2+) is required as a cofactor.

It catalyses the reaction ATP + (deoxyribonucleotide)n-3'-hydroxyl + 5'-phospho-(deoxyribonucleotide)m = (deoxyribonucleotide)n+m + AMP + diphosphate.. Functionally, DNA ligase that seals nicks in double-stranded DNA during DNA replication, DNA recombination and DNA repair. The polypeptide is DNA ligase (Pyrobaculum islandicum (strain DSM 4184 / JCM 9189 / GEO3)).